A 496-amino-acid polypeptide reads, in one-letter code: uncharacterized protein (496 aa).

Mg(2+)-binding residues include Asp-36, Asp-81, Glu-300, Glu-302, Asp-321, Asp-323, and Asp-375.

The protein belongs to the XPG/RAD2 endonuclease family. FEN1 subfamily. It depends on Mg(2+) as a cofactor.

This is an uncharacterized protein from Schizosaccharomyces pombe (strain 972 / ATCC 24843) (Fission yeast).